We begin with the raw amino-acid sequence, 121 residues long: Succinate dehydrogenase assembly factor 3, mitochondrial (121 aa).

The transit peptide at 1-35 (MRPSLVRLVRPRRPERKTSPILPPLKLYKALLRAH) directs the protein to the mitochondrion.

Belongs to the complex I LYR family. SDHAF3 subfamily. As to quaternary structure, interacts with the iron-sulfur protein subunit within the SDH catalytic dimer.

It localises to the mitochondrion matrix. In terms of biological role, plays an essential role in the assembly of succinate dehydrogenase (SDH), an enzyme complex (also referred to as respiratory complex II) that is a component of both the tricarboxylic acid (TCA) cycle and the mitochondrial electron transport chain, and which couples the oxidation of succinate to fumarate with the reduction of ubiquinone (coenzyme Q) to ubiquinol. Promotes maturation of the iron-sulfur protein subunit of the SDH catalytic dimer, protecting it from the deleterious effects of oxidants. May act together with SDHAF1. The sequence is that of Succinate dehydrogenase assembly factor 3, mitochondrial from Debaryomyces hansenii (strain ATCC 36239 / CBS 767 / BCRC 21394 / JCM 1990 / NBRC 0083 / IGC 2968) (Yeast).